A 217-amino-acid polypeptide reads, in one-letter code: Ras-related protein RABA2a (217 aa).

Residue 19-26 (GDSGVGKS) coordinates GTP. The Effector region motif lies at 41-49 (SKSTIGVEF). GTP contacts are provided by residues 67-71 (DTAGQ), 125-128 (NKTD), and 155-156 (SA). The S-palmitoyl cysteine moiety is linked to residue Cys-213. Residue Cys-214 is modified to Cysteine methyl ester. The S-geranylgeranyl cysteine moiety is linked to residue Cys-214. Positions 215 to 217 (SSS) are cleaved as a propeptide — removed in mature form.

The protein belongs to the small GTPase superfamily. Rab family. In terms of tissue distribution, expressed in root tips.

Its subcellular location is the endosome membrane. The protein resides in the golgi apparatus. It localises to the trans-Golgi network membrane. Intracellular vesicle trafficking and protein transport. In Arabidopsis thaliana (Mouse-ear cress), this protein is Ras-related protein RABA2a (RABA2A).